The chain runs to 219 residues: Lipid transferase CIDEB (219 aa).

Residues 34–110 (PQRPFRVCDH…VLQSGQSWSP (77 aa)) form the CIDE-N domain.

The protein belongs to the CIDE family. Interacts with DFFA. Interacts with DFFB; inhibited by DFFB. Interacts with APOB. Interacts with PREB/SEC12; facilitating loading of SCAP-SREBP into COPII vesicles. In terms of assembly, (Microbial infection) Interacts (via N-terminus) with HCV non-structural protein 5A (via N-terminus); this interaction seems to regulate the association of HCV particles with ApoE. As to expression, highly expressed in liver and small intestine and, at lower levels, in colon, kidney and spleen.

Its subcellular location is the lipid droplet. The protein resides in the endoplasmic reticulum membrane. It is found in the golgi apparatus. The protein localises to the cytoplasmic vesicle. It localises to the COPI-coated vesicle. In terms of biological role, lipid transferase specifically expressed in hepatocytes, which promotes unilocular lipid droplet formation by mediating lipid droplet fusion. Lipid droplet fusion promotes their enlargement, restricting lipolysis and favoring lipid storage. Localizes on the lipid droplet surface, at focal contact sites between lipid droplets, and mediates atypical lipid droplet fusion by promoting directional net neutral lipid transfer from the smaller to larger lipid droplets. The transfer direction may be driven by the internal pressure difference between the contacting lipid droplet pair. Promotes lipid exchange and lipid droplet fusion in both small and large lipid droplet-containing hepatocytes. In addition to its role in lipid droplet fusion, also involved in cytoplasmic vesicle biogenesis and transport. Required for very-low-density lipoprotein (VLDL) lipidation and maturation. Probably involved in the biogenesis of VLDL transport vesicles by forming a COPII vesicle coat and facilitating the formation of endoplasmic reticulum-derived large vesicles. Also involved in sterol-regulated export of the SCAP-SREBP complex, composed of SCAP, SREBF1/SREBP1 and SREBF2/SREBP2, by promoting loading of SCAP-SREBP into COPII vesicles. May also activate apoptosis. Functionally, (Microbial infection) Involved in Hepatatis C virus (HCV) assembly and required for HCV entry into hepatocytes. The polypeptide is Lipid transferase CIDEB (Homo sapiens (Human)).